A 158-amino-acid polypeptide reads, in one-letter code: Endoribonuclease YbeY (158 aa).

3 residues coordinate Zn(2+): histidine 119, histidine 123, and histidine 129.

The protein belongs to the endoribonuclease YbeY family. Zn(2+) serves as cofactor.

It localises to the cytoplasm. Functionally, single strand-specific metallo-endoribonuclease involved in late-stage 70S ribosome quality control and in maturation of the 3' terminus of the 16S rRNA. This is Endoribonuclease YbeY from Acinetobacter baumannii (strain ACICU).